A 129-amino-acid chain; its full sequence is Modulator protein MzrA (129 aa).

Residues Met1 to His14 are Cytoplasmic-facing. The helical transmembrane segment at Tyr15–Val35 threads the bilayer. Topologically, residues Gln36–Gly129 are periplasmic.

The protein belongs to the MzrA family. Interacts with EnvZ.

Its subcellular location is the cell inner membrane. Its function is as follows. Modulates the activity of the EnvZ/OmpR two-component regulatory system, probably by directly modulating EnvZ enzymatic activity and increasing stability of phosphorylated OmpR. The protein is Modulator protein MzrA of Yersinia pestis (strain Pestoides F).